The following is a 100-amino-acid chain: Carboxysome shell vertex protein CcmL (100 aa).

The region spanning 1–83 (MQIGRVRGTV…VDAVVIGIID (83 aa)) is the BMV domain.

The protein belongs to the CcmL/EutN family. CcmL subfamily. In terms of assembly, homopentamer. Interacts with full-length CcmM.

The protein resides in the carboxysome. Functionally, probably forms vertices in the carboxysome, a polyhedral inclusion where RuBisCO (ribulose bisphosphate carboxylase, rbcL-rbcS) is sequestered. Has been modeled to induce curvature upon insertion into an otherwise flat hexagonal molecular layer of CcmK subunits. The protein is Carboxysome shell vertex protein CcmL of Gloeobacter violaceus (strain ATCC 29082 / PCC 7421).